The following is a 499-amino-acid chain: Gypsy retrotransposon integrase-like protein 1 (499 aa).

The region spanning 113 to 270 (KVENPWSIVT…TPYFQMFNRN (158 aa)) is the Integrase catalytic domain.

The polypeptide is Gypsy retrotransposon integrase-like protein 1 (GIN1) (Bos taurus (Bovine)).